The chain runs to 1208 residues: DNA-directed RNA polymerase subunit beta (1208 aa).

The protein belongs to the RNA polymerase beta chain family. In terms of assembly, the RNAP catalytic core consists of 2 alpha, 1 beta, 1 beta' and 1 omega subunit. When a sigma factor is associated with the core the holoenzyme is formed, which can initiate transcription.

It catalyses the reaction RNA(n) + a ribonucleoside 5'-triphosphate = RNA(n+1) + diphosphate. In terms of biological role, DNA-dependent RNA polymerase catalyzes the transcription of DNA into RNA using the four ribonucleoside triphosphates as substrates. The chain is DNA-directed RNA polymerase subunit beta from Enterococcus faecium (Streptococcus faecium).